A 166-amino-acid chain; its full sequence is Small ribosomal subunit protein uS5 (166 aa).

Residues 11–74 (LQEKLIAVNR…EKARRNMINV (64 aa)) form the S5 DRBM domain.

It belongs to the universal ribosomal protein uS5 family. Part of the 30S ribosomal subunit. Contacts proteins S4 and S8.

Functionally, with S4 and S12 plays an important role in translational accuracy. In terms of biological role, located at the back of the 30S subunit body where it stabilizes the conformation of the head with respect to the body. The chain is Small ribosomal subunit protein uS5 from Pasteurella multocida (strain Pm70).